The primary structure comprises 112 residues: uncharacterized protein (112 aa).

An N-terminal signal peptide occupies residues 1-25; it reads MKGTKLAVVVGMTVAAVSLAAPAQA.

This is an uncharacterized protein from Mycobacterium tuberculosis (strain CDC 1551 / Oshkosh).